An 817-amino-acid polypeptide reads, in one-letter code: Leucine--tRNA ligase (817 aa).

Positions 40-50 match the 'HIGH' region motif; the sequence is PYPSGKLHMGH. A 'KMSKS' region motif is present at residues 578-582; it reads KMSKS. An ATP-binding site is contributed by lysine 581.

Belongs to the class-I aminoacyl-tRNA synthetase family.

The protein resides in the cytoplasm. The enzyme catalyses tRNA(Leu) + L-leucine + ATP = L-leucyl-tRNA(Leu) + AMP + diphosphate. The chain is Leucine--tRNA ligase from Caldicellulosiruptor saccharolyticus (strain ATCC 43494 / DSM 8903 / Tp8T 6331).